A 404-amino-acid polypeptide reads, in one-letter code: Zinc finger CCCH domain-containing protein 15 homolog (404 aa).

A compositionally biased stretch (pro residues) spans 1–10 (MPPKKAPPGP). Residues 1–71 (MPPKKAPPGP…KRKEEKEKKL (71 aa)) form a disordered region. Positions 12–28 (KKTEQKKKEKVIEDKTF) are enriched in basic and acidic residues. The segment covering 38–50 (QQKFIQQVQKQVQ) has biased composition (low complexity). Residues 56–71 (PRQDGDKRKEEKEKKL) are compositionally biased toward basic and acidic residues. C3H1-type zinc fingers lie at residues 94–121 (DPKSVVCAFFKQGTCTKGDKCKFSHDLS) and 165–202 (PTTDIICKFFLEAVEKSKYGWFWECPNGGKCIYRHALP). Position 218 is a phosphothreonine (Thr218). Ser221 carries the phosphoserine modification. Residues 246–270 (LAWKKRKIAEKKAKLAAEEERKKSD) adopt a coiled-coil conformation. Composition is skewed to low complexity over residues 352 to 361 (EAAKTAAAED) and 369 to 380 (PSSSAPANDAAP). Positions 352-380 (EAAKTAAAEDAAADEDGPSSSAPANDAAP) are disordered.

It belongs to the ZC3H15/TMA46 family.

This chain is Zinc finger CCCH domain-containing protein 15 homolog, found in Drosophila melanogaster (Fruit fly).